Consider the following 2514-residue polypeptide: Probable polyketide synthase 8/35 (2514 aa).

The region spanning 11–442 (DKGVAIVGVG…GSNCCLLISE (432 aa)) is the Ketosynthase family 3 (KS3) domain. Active-site for beta-ketoacyl synthase activity residues include Cys181, His323, and His362. The tract at residues 635–668 (GVNPSFILGHSLGEISAAYCSGMIDLDTFCYTVY) is acyl/malonyl transferase. The active-site For acyl/malonyl transferase activity is Ser645. Residues 925–1047 (IDHLGLSNSY…ANFQLLDHGN (123 aa)) form an N-terminal hotdog fold region. The region spanning 925–1209 (IDHLGLSNSY…FKSLIPIKHS (285 aa)) is the PKS/mFAS DH domain. His959 serves as the catalytic Proton acceptor; for dehydratase activity. Positions 1064 to 1209 (NLSKLTKNEL…FKSLIPIKHS (146 aa)) are C-terminal hotdog fold. Asp1122 (proton donor; for dehydratase activity) is an active-site residue. The Carrier domain occupies 2431–2508 (IGNKNIDELF…ISIKMILNSL (78 aa)). Ser2468 bears the O-(pantetheine 4'-phosphoryl)serine mark.

The cofactor is pantetheine 4'-phosphate.

In terms of biological role, probable polyketide synthase. This Dictyostelium discoideum (Social amoeba) protein is Probable polyketide synthase 8/35 (pks8).